A 450-amino-acid chain; its full sequence is 6-phospho-beta-glucosidase (450 aa).

L5–D73 lines the NAD(+) pocket. Substrate is bound by residues R96 and N150. The Mn(2+) site is built by C172 and H203. Y258 serves as the catalytic Proton acceptor.

Homotetramer. NAD(+) serves as cofactor. Mn(2+) is required as a cofactor. The cofactor is Co(2+). It depends on Ni(2+) as a cofactor.

The catalysed reaction is 6-phospho-beta-D-glucosyl-(1-&gt;4)-D-glucose + H2O = D-glucose 6-phosphate + D-glucose. Functionally, hydrolyzes a wide variety of P-beta-glucosides including cellobiose-6P, salicin-6P, arbutin-6P, gentiobiose-6P, methyl-beta-glucoside-6P and p-nitrophenyl-beta-D-glucopyranoside-6P. Is also able to hydrolyze phospho-N,N'-diacetylchitobiose. The sequence is that of 6-phospho-beta-glucosidase (chbF) from Escherichia coli (strain K12).